Reading from the N-terminus, the 323-residue chain is DNA-directed RNA polymerase subunit alpha (323 aa).

Residues 1 to 233 form an alpha N-terminal domain (alpha-NTD) region; the sequence is MGQEKVTVST…DLFIPFFHAE (233 aa). The segment at 264 to 323 is alpha C-terminal domain (alpha-CTD); it reads IALKYIYIDQSELPPRVYNCLKRSNINTFLELLNNSQEELMKIQDFRIEDVKHILDVLEI.

Belongs to the RNA polymerase alpha chain family. In plastids the minimal PEP RNA polymerase catalytic core is composed of four subunits: alpha, beta, beta', and beta''. When a (nuclear-encoded) sigma factor is associated with the core the holoenzyme is formed, which can initiate transcription.

The protein resides in the plastid. The protein localises to the chloroplast. The enzyme catalyses RNA(n) + a ribonucleoside 5'-triphosphate = RNA(n+1) + diphosphate. DNA-dependent RNA polymerase catalyzes the transcription of DNA into RNA using the four ribonucleoside triphosphates as substrates. This is DNA-directed RNA polymerase subunit alpha from Morus indica (Mulberry).